The following is a 364-amino-acid chain: MAQTLINDTFLRALLREPTDYTPIWLMRQAGRYLPEYNATRARAGSFLGLAKHPDYATEVTLQPLERFPLDAAILFSDILTIPDAMGLGLDFAAGEGPKFAHPVRTEADVAKLAVPDIGATLGYVTDAVREIRRALTDGEGRQRVPLIGFSGSPWTLACYMVEGGGSDDFRTVKSMAYARPDLMHRILDVNAQAVAAYLNAQIEAGAQAVMIFDTWGGALADGAYQRFSLDYIRRVVAQLKREHDGARVPAIAFTKGGGLWLEDLAATGVDAVGLDWTVNLGRARERVAGRVALQGNLDPTILFAPPEAIRAEARAVLDSYGNHPGHVFNLGHGISQFTPPEHVAELVDEVHRHSRAIRSGTGS.

Residues 28-32, aspartate 78, tyrosine 160, threonine 215, and histidine 333 each bind substrate; that span reads RQAGR.

It belongs to the uroporphyrinogen decarboxylase family. Homodimer.

Its subcellular location is the cytoplasm. It carries out the reaction uroporphyrinogen III + 4 H(+) = coproporphyrinogen III + 4 CO2. It functions in the pathway porphyrin-containing compound metabolism; protoporphyrin-IX biosynthesis; coproporphyrinogen-III from 5-aminolevulinate: step 4/4. Catalyzes the decarboxylation of four acetate groups of uroporphyrinogen-III to yield coproporphyrinogen-III. The chain is Uroporphyrinogen decarboxylase from Burkholderia thailandensis (strain ATCC 700388 / DSM 13276 / CCUG 48851 / CIP 106301 / E264).